We begin with the raw amino-acid sequence, 100 residues long: Aspartyl/glutamyl-tRNA(Asn/Gln) amidotransferase subunit C (100 aa).

Belongs to the GatC family. Heterotrimer of A, B and C subunits.

The enzyme catalyses L-glutamyl-tRNA(Gln) + L-glutamine + ATP + H2O = L-glutaminyl-tRNA(Gln) + L-glutamate + ADP + phosphate + H(+). The catalysed reaction is L-aspartyl-tRNA(Asn) + L-glutamine + ATP + H2O = L-asparaginyl-tRNA(Asn) + L-glutamate + ADP + phosphate + 2 H(+). Its function is as follows. Allows the formation of correctly charged Asn-tRNA(Asn) or Gln-tRNA(Gln) through the transamidation of misacylated Asp-tRNA(Asn) or Glu-tRNA(Gln) in organisms which lack either or both of asparaginyl-tRNA or glutaminyl-tRNA synthetases. The reaction takes place in the presence of glutamine and ATP through an activated phospho-Asp-tRNA(Asn) or phospho-Glu-tRNA(Gln). The protein is Aspartyl/glutamyl-tRNA(Asn/Gln) amidotransferase subunit C of Streptococcus pneumoniae (strain Taiwan19F-14).